Reading from the N-terminus, the 122-residue chain is Large ribosomal subunit protein uL14 (122 aa).

The protein belongs to the universal ribosomal protein uL14 family. In terms of assembly, part of the 50S ribosomal subunit. Forms a cluster with proteins L3 and L19. In the 70S ribosome, L14 and L19 interact and together make contacts with the 16S rRNA in bridges B5 and B8.

In terms of biological role, binds to 23S rRNA. Forms part of two intersubunit bridges in the 70S ribosome. This is Large ribosomal subunit protein uL14 from Chlorobaculum parvum (strain DSM 263 / NCIMB 8327) (Chlorobium vibrioforme subsp. thiosulfatophilum).